The sequence spans 158 residues: Regulator of sigma D (158 aa).

The protein belongs to the Rsd/AlgQ family. As to quaternary structure, interacts with RpoD.

The protein resides in the cytoplasm. In terms of biological role, binds RpoD and negatively regulates RpoD-mediated transcription activation by preventing the interaction between the primary sigma factor RpoD with the catalytic core of the RNA polymerase and with promoter DNA. May be involved in replacement of the RNA polymerase sigma subunit from RpoD to RpoS during the transition from exponential growth to the stationary phase. This is Regulator of sigma D from Escherichia coli (strain SMS-3-5 / SECEC).